A 430-amino-acid chain; its full sequence is Tol-Pal system protein TolB (430 aa).

A signal peptide spans 1–21 (MKQALRVAFGFLMLWAAVLHA).

Belongs to the TolB family. As to quaternary structure, the Tol-Pal system is composed of five core proteins: the inner membrane proteins TolA, TolQ and TolR, the periplasmic protein TolB and the outer membrane protein Pal. They form a network linking the inner and outer membranes and the peptidoglycan layer.

It is found in the periplasm. Part of the Tol-Pal system, which plays a role in outer membrane invagination during cell division and is important for maintaining outer membrane integrity. TolB occupies a key intermediary position in the Tol-Pal system because it communicates directly with both membrane-embedded components, Pal in the outer membrane and TolA in the inner membrane. The polypeptide is Tol-Pal system protein TolB (Salmonella typhi).